The sequence spans 207 residues: UPF0328 protein ECU02_1590/ECU04_0060/ECU08_2120 (207 aa).

Disordered regions lie at residues 1 to 154 (MPRP…HSHT) and 180 to 207 (GRLHGSPTKGAQTAQQAQPHPPKQLATL). Basic and acidic residues-rich tracts occupy residues 14-24 (DHPDFRSESSA) and 75-97 (HTEGCHTHEANPEPNTKHTETES). Composition is skewed to polar residues over residues 98–121 (PKPQTSTQHHTPITIPSSLLSQNT) and 133–149 (SRPSTIPANTYQPQSPH).

The protein belongs to the UPF0328 family.

The chain is UPF0328 protein ECU02_1590/ECU04_0060/ECU08_2120 from Encephalitozoon cuniculi (strain GB-M1) (Microsporidian parasite).